Reading from the N-terminus, the 277-residue chain is Putative protease slr0021 (277 aa).

Serine 85 (nucleophile) is an active-site residue. Lysine 137 serves as the catalytic Proton donor/acceptor.

Belongs to the peptidase S49 family.

This Synechocystis sp. (strain ATCC 27184 / PCC 6803 / Kazusa) protein is Putative protease slr0021.